Here is a 292-residue protein sequence, read N- to C-terminus: THO complex subunit 4B (292 aa).

The disordered stretch occupies residues 1–50 (MSGGLDMSLDDIIKSNRKPTGSRGRGGIGGGNNTGGRGGSGSNSGPSRRF). The residue at position 2 (S2) is an N-acetylserine. The span at 23 to 42 (RGRGGIGGGNNTGGRGGSGS) shows a compositional bias: gly residues. Residues 108 to 185 (TKLYISNLDY…KLMKIEIVGT (78 aa)) enclose the RRM domain. Residues 241–252 (GGGFGGGNFRGG) are compositionally biased toward gly residues. Residues 241–292 (GGGFGGGNFRGGRGARGRGGRGSGGRGRDENVSAEDLDAELDKYHKEAMETS) form a disordered region. Residues 280–292 (ELDKYHKEAMETS) are compositionally biased toward basic and acidic residues.

Belongs to the ALYREF family. Interacts with RH15 and RH56.

It is found in the nucleus. The protein localises to the nucleoplasm. Export adapter involved in nuclear export of spliced and unspliced mRNA. The chain is THO complex subunit 4B (ALY2) from Arabidopsis thaliana (Mouse-ear cress).